The chain runs to 1117 residues: Sodium-driven chloride bicarbonate exchanger (1117 aa).

Disordered regions lie at residues 1–23 (MEIK…EEAV) and 58–97 (GRKS…TPSQ). The Cytoplasmic portion of the chain corresponds to 1 to 508 (MEIKDQGAQM…DFRDAFSLQC (508 aa)). Residues 59–76 (RKSHRRHRHRGHKHRKRD) show a composition bias toward basic residues. Residue serine 89 is modified to Phosphoserine. Phosphothreonine is present on threonine 94. Serine 275 is modified (phosphoserine). Disordered stretches follow at residues 282 to 309 (DFSK…KGPP) and 431 to 476 (WDPS…PELQ). A helical transmembrane segment spans residues 509–529 (LASFLFLYCACMSPVITFGGL). At 530 to 537 (LGEATEGR) the chain is on the extracellular side. The chain crosses the membrane as a helical span at residues 538–558 (ISAIESLFGASMTGIAYSLFG). Residues 559-561 (GQP) lie on the Cytoplasmic side of the membrane. A helical membrane pass occupies residues 562 to 582 (LTILGSTGPVLVFEKILFKFC). At 583 to 595 (KEYGLSYLSLRAS) the chain is on the extracellular side. The chain crosses the membrane as a helical span at residues 596–616 (IGLWTATLCIILVATDASSLV). Residues 617-625 (CYITRFTEE) are Cytoplasmic-facing. Residues 626-646 (AFASLICIIFIYEALEKLFEL) form a helical membrane-spanning segment. The Extracellular portion of the chain corresponds to 647–719 (SESYPINMHN…VGRACGHGHP (73 aa)). Residues asparagine 676, asparagine 686, and asparagine 696 are each glycosylated (N-linked (GlcNAc...) asparagine). Residues 720–740 (YVPDVLFWSVILFFSTVTMSA) traverse the membrane as a helical segment. The Cytoplasmic portion of the chain corresponds to 741 to 761 (TLKQFKTSRYFPTKVRSIVSD). Residues 762–782 (FAVFLTILCMVLIDYAIGIPS) traverse the membrane as a helical segment. Over 783–808 (PKLQVPSVFKPTRDDRGWFVTPLGPN) the chain is Extracellular. A helical membrane pass occupies residues 809 to 829 (PWWTIIAAIIPALLCTILIFM). Residues 830–854 (DQQITAVIINRKEHKLKKGCGYHLD) lie on the Cytoplasmic side of the membrane. A helical transmembrane segment spans residues 855–875 (LLMVAVMLGVCSIMGLPWFVA). Over 876–911 (ATVLSITHVNSLKLESECSAPGEQPKFLGIREQRVT) the chain is Extracellular. A helical membrane pass occupies residues 912-932 (GLMIFILMGSSVFMTSILKFI). Topologically, residues 933–934 (PM) are cytoplasmic. The chain crosses the membrane as a helical span at residues 935-955 (PVLYGVFLYMGASSLKGIQLF). At 956–997 (DRIKLFWMPAKHQPDFIYLRHVPLRKVHLFTVIQMSCLGLLW) the chain is on the extracellular side. A helical membrane pass occupies residues 998-1018 (IIKVSRAAIVFPMMVLALVFV). At 1019-1117 (RKLMDFLFTK…SRFPSKSSPS (99 aa)) the chain is on the cytoplasmic side. 2 positions are modified to phosphoserine: serine 1056 and serine 1084.

This sequence belongs to the anion exchanger (TC 2.A.31) family. In terms of processing, N-glycosylated. In the brain, detected in cerebral cortex, subcortex, cerebellum, hippocampus and medulla (at protein level). Expressed in neurons but not in astrocytes (at protein level). Isoforms starting with Met-Glu-Ile-Lys are found predominantly in the brain with lower levels in the eye while isoforms starting with Met-Cys-Asp-Leu are most abundant in the kidney with lower levels in the duodenum, jejunum and ileum (at protein level). In the kidney, isoforms starting with Met-Cys-Asp-Leu are primarily expressed in the cortex, the outer stripe of the outer medulla and the inner stripe of the outer medulla (ISOM) but are not detectable in the inner medulla (IM) while isoforms starting with Met-Glu-Ile-Lys are predominantly expressed in the ISOM and IM. Expressed in the brain, in the hippocampus as well as in dentate gyrus, cortical layers, cerebellum, olfactory bulb and in the epithelial cells of the choroid plexus. Detected in pituitary, testis, kidney and ileum. Detected also in spleen and lung. As to expression, mainly expressed in the jejenum (at protein level).

Its subcellular location is the basolateral cell membrane. The protein resides in the apical cell membrane. It is found in the cell projection. The protein localises to the dendrite. It localises to the axon. Its subcellular location is the perikaryon. The protein resides in the presynapse. It is found in the postsynapse. It carries out the reaction 2 hydrogencarbonate(out) + chloride(in) + Na(+)(out) = 2 hydrogencarbonate(in) + chloride(out) + Na(+)(in). Its function is as follows. Sodium/bicarbonate cotransporter which plays an important role in regulating intracellular pH. Has been shown to act as a sodium/bicarbonate cotransporter in exchange for intracellular chloride. Has also been shown to act as a sodium/biocarbonate cotransporter which does not couple net influx of bicarbonate to net efflux of chloride, with the observed chloride efflux being due to chloride self-exchange. Controls neuronal pH and may contribute to the secretion of cerebrospinal fluid. Acting on presynaptic intracellular pH, it promotes GABA release, reduces the excitability of CA1 pyramidal neurons, and modulates short-term synaptic plasticity. Required in retinal cells to maintain normal pH which is necessary for normal vision. In the kidney, likely to mediate bicarbonate reclamation in the apical membrane of the proximal tubules. In terms of biological role, sodium/bicarbonate cotransporter which mediates cotransport of sodium and bicarbonate in association with an efflux of intracellular chloride and is involved in NaCl absorption in the small intestine. The chain is Sodium-driven chloride bicarbonate exchanger from Rattus norvegicus (Rat).